The sequence spans 20 residues: Cuticle-degrading protease-like protein (20 aa).

Residues 1–20 are disordered; sequence AIVEQQGAPXGLGRIINKXK.

Belongs to the peptidase S8 family.

Its subcellular location is the secreted. Its function is as follows. Capable of breaching the insect cuticle. The chain is Cuticle-degrading protease-like protein from Metacordyceps chlamydosporia (Nematophagous fungus).